Consider the following 409-residue polypeptide: Arginine deiminase (409 aa).

The active-site Amidino-cysteine intermediate is Cys399.

Belongs to the arginine deiminase family.

It localises to the cytoplasm. It catalyses the reaction L-arginine + H2O = L-citrulline + NH4(+). It functions in the pathway amino-acid degradation; L-arginine degradation via ADI pathway; carbamoyl phosphate from L-arginine: step 1/2. The protein is Arginine deiminase (arcA) of Borreliella afzelii (Borrelia afzelii).